We begin with the raw amino-acid sequence, 259 residues long: Protein SODIUM POTASSIUM ROOT DEFECTIVE 2 (259 aa).

The segment at 141–165 (PDSITGSVDQDPAKTVEAEAPAGED) is disordered. Basic and acidic residues predominate over residues 151–165 (DPAKTVEAEAPAGED). The HMA domain occupies 180-246 (QQVVVLKVSL…KVKNAQFWTN (67 aa)). Residues cysteine 191 and cysteine 194 each coordinate a metal cation.

This Arabidopsis thaliana (Mouse-ear cress) protein is Protein SODIUM POTASSIUM ROOT DEFECTIVE 2.